The sequence spans 318 residues: Protein LplB (318 aa).

6 helical membrane passes run leucine 35–isoleucine 55, leucine 94–leucine 114, phenylalanine 130–phenylalanine 150, isoleucine 182–leucine 202, isoleucine 236–tyrosine 256, and alanine 289–alanine 309. An ABC transmembrane type-1 domain is found at leucine 90 to alanine 305.

It belongs to the binding-protein-dependent transport system permease family. MalFG subfamily.

The protein localises to the cell membrane. This Bacillus subtilis (strain 168) protein is Protein LplB (lplB).